Here is a 351-residue protein sequence, read N- to C-terminus: Protein TBATA (351 aa).

4 disordered regions span residues 16–40, 167–186, 195–216, and 292–351; these read KAEL…PQKE, KKEK…KYSA, STRA…SSRH, and EVHE…RAES. The segment covering 167 to 181 has biased composition (basic and acidic residues); it reads KKEKEQKEEPLREQG. 2 stretches are compositionally biased toward basic and acidic residues: residues 292–302 and 340–351; these read EVHEPPQEKQE and TEKKTSKPRAES.

Belongs to the TBATA family.

Its subcellular location is the cytoplasm. It localises to the cytosol. Its function is as follows. May play a role in spermatid differentiation. Modulates thymic stromal cell proliferation and thymus function. The polypeptide is Protein TBATA (TBATA) (Homo sapiens (Human)).